Here is a 70-residue protein sequence, read N- to C-terminus: uncharacterized protein (70 aa).

It to M.pneumoniae MPN377.

This is an uncharacterized protein from Ureaplasma parvum serovar 3 (strain ATCC 700970).